The following is a 779-amino-acid chain: uncharacterized protein (779 aa).

C72 and C75 together coordinate [4Fe-4S] cluster.

It belongs to the prokaryotic molybdopterin-containing oxidoreductase family. The cofactor is [4Fe-4S] cluster. Mo-bis(molybdopterin guanine dinucleotide) is required as a cofactor.

This is an uncharacterized protein from Mycobacterium bovis (strain ATCC BAA-935 / AF2122/97).